A 447-amino-acid chain; its full sequence is Asparagine--tRNA ligase (447 aa).

It belongs to the class-II aminoacyl-tRNA synthetase family. Homodimer.

It is found in the cytoplasm. The enzyme catalyses tRNA(Asn) + L-asparagine + ATP = L-asparaginyl-tRNA(Asn) + AMP + diphosphate + H(+). The chain is Asparagine--tRNA ligase from Streptococcus pneumoniae (strain ATCC BAA-255 / R6).